Reading from the N-terminus, the 1383-residue chain is Periaxin (1383 aa).

The residue at position 7 (serine 7) is a Phosphoserine. The PDZ domain maps to 16-99 (LVEIIVETEA…YKVSFCLKRT (84 aa)). Residues 70–84 (VFFENFKYEDALRLL) carry the Nuclear export signal motif. 2 positions are modified to phosphoserine: serine 133 and serine 243. 46 repeat units span residues 432–436 (GPEVK), 440–444 (GPEVK), 448–452 (VPEIK), 456–460 (APEAA), 461–465 (IPDVQ), 466–470 (LPEVQ), 474–478 (MSDMK), 482–486 (IPEMA), 487–491 (VPDVH), 492–496 (LPEVK), 497–501 (LPKVP), 502–506 (EMKVP), 507–511 (EMKLP), 515–519 (EMAVP), 523–527 (LPDIQ), 531–535 (VPEMK), 536–540 (LPDMK), 544–548 (VPEMA), 549–553 (VPDVH), 554–558 (LPDIQ), 562–566 (VPEMK), 567–571 (LPDMK), 575–579 (VPEMA), 580–584 (VPDVR), 585–589 (IPEVQ), 593–597 (VSEVK), 601–605 (IPDMA), 606–610 (VPDVR), 611–615 (LPELQ), 619–623 (MSEVK), 627–631 (IPDMA), 632–636 (VPDVR), 637–641 (LPEVQ), 645–649 (VSELK), 653–657 (VPEMT), 658–662 (MPDIR), 663–667 (LPEVQ), 671–675 (VPDIK), 676–680 (LPEIK), 684–688 (VPEMA), 689–693 (VPDVP), 694–698 (LPELQ), 699–703 (LPKVP), 705–709 (VPDVH), 713–717 (VPEMK), and 718–722 (LPKVP). Residues 432-722 (GPEVKAPKGP…VPEMKLPKVP (291 aa)) are 46 X 5 AA approximate tandem repeats of [LVMGIE]-[PSM]-[EDKA]-[LIVMA]-[AQKHPRT]; that may have a tripeptide spacer of [ALKD]-[IPV]-[KPH]. 9 positions are modified to phosphoserine: serine 838, serine 971, serine 1020, serine 1271, serine 1275, serine 1277, serine 1285, serine 1323, and serine 1329. The disordered stretch occupies residues 1251–1383 (KVKSPKLRLP…RIEGTQAAAI (133 aa)). Positions 1267 to 1277 (SESASGEGSPS) are enriched in low complexity. Basic and acidic residues predominate over residues 1346–1355 (GSKDREEGGF). A Phosphoserine modification is found at serine 1361.

This sequence belongs to the periaxin family. As to quaternary structure, homodimer (via PDZ domain). Interacts with SCN10A. Found in a complex with SCN10A. Interacts with DRP2. Identified in a dystroglycan complex that contains at least PRX, DRP2, UTRN, DMD and DAG1. Detected in a complex composed of at least EZR, AHNAK, PPL and PRX. Identified in a complex with EZR, AHNAK, BFSP1, BFSP2, ANK2, PLEC, VIM and spectrin. The N-terminus is blocked. As to expression, detected in sciatic nerve and in trigeminal nerve Schwann cells. Detected in myelinating Schwann cells in sciatic nerve (at protein level).

The protein resides in the nucleus. It localises to the cytoplasm. It is found in the cell membrane. The protein localises to the cell junction. In terms of biological role, scaffolding protein that functions as part of a dystroglycan complex in Schwann cells, and as part of EZR and AHNAK-containing complexes in eye lens fiber cells. Required for the maintenance of the peripheral myelin sheath that is essential for normal transmission of nerve impulses and normal perception of sensory stimuli. Required for normal transport of MBP mRNA from the perinuclear to the paranodal regions. Required for normal remyelination after nerve injury. Required for normal elongation of Schwann cells and normal length of the internodes between the nodes of Ranvier. The demyelinated nodes of Ranvier permit saltatory transmission of nerve impulses; shorter internodes cause slower transmission of nerve impulses. Required for the formation of appositions between the abaxonal surface of the myelin sheath and the Schwann cell plasma membrane; the Schwann cell cytoplasm is restricted to regions between these appositions. Required for the formation of Cajal bands and of Schmidt-Lanterman incisures that correspond to short, cytoplasm-filled regions on myelinated nerves. Recruits DRP2 to the Schwann cell plasma membrane. Required for normal protein composition of the eye lens fiber cell plasma membrane and normal eye lens fiber cell morphology. This is Periaxin (Prx) from Rattus norvegicus (Rat).